The sequence spans 227 residues: Endo-1,4-beta-xylanase 2 (227 aa).

The signal sequence occupies residues 1-36 (MVSIKSVLAAATAVSSALAAPFDFVPRDNSTALQAR). N-linked (GlcNAc...) asparagine glycosylation occurs at Asn-29. Residues 37–225 (QVTPNAEGWH…SSGESDIYVQ (189 aa)) enclose the GH11 domain. The active-site Nucleophile is the Glu-121. Glu-212 functions as the Proton donor in the catalytic mechanism.

The protein belongs to the glycosyl hydrolase 11 (cellulase G) family.

It is found in the secreted. It catalyses the reaction Endohydrolysis of (1-&gt;4)-beta-D-xylosidic linkages in xylans.. The protein operates within glycan degradation; xylan degradation. Its function is as follows. Endo-1,4-beta-xylanase involved in the hydrolysis of xylan, a major structural heterogeneous polysaccharide found in plant biomass representing the second most abundant polysaccharide in the biosphere, after cellulose. The polypeptide is Endo-1,4-beta-xylanase 2 (xyn2) (Humicola insolens (Soft-rot fungus)).